Consider the following 81-residue polypeptide: Small ribosomal subunit protein bS18 (81 aa).

This sequence belongs to the bacterial ribosomal protein bS18 family. In terms of assembly, part of the 30S ribosomal subunit. Forms a tight heterodimer with protein bS6.

Its function is as follows. Binds as a heterodimer with protein bS6 to the central domain of the 16S rRNA, where it helps stabilize the platform of the 30S subunit. This Parvibaculum lavamentivorans (strain DS-1 / DSM 13023 / NCIMB 13966) protein is Small ribosomal subunit protein bS18.